We begin with the raw amino-acid sequence, 520 residues long: Transactivator/viroplasmin protein (520 aa).

The interval 486 to 520 (VQDASADSGPKDGPPPTRSIVEKEDVPTTSSKQVD) is disordered.

It belongs to the caulimoviridae viroplasmin family.

It is found in the host cytoplasm. Functionally, enhances the ribosomal termination-reinitiation event leading to the translation of major open reading frames on the polycistronic viral RNAs. This chain is Transactivator/viroplasmin protein, found in Cauliflower mosaic virus (strain BBC) (CaMV).